Consider the following 713-residue polypeptide: Glycine--tRNA ligase beta subunit (713 aa).

It belongs to the class-II aminoacyl-tRNA synthetase family. Tetramer of two alpha and two beta subunits.

It localises to the cytoplasm. It catalyses the reaction tRNA(Gly) + glycine + ATP = glycyl-tRNA(Gly) + AMP + diphosphate. The sequence is that of Glycine--tRNA ligase beta subunit from Picosynechococcus sp. (strain ATCC 27264 / PCC 7002 / PR-6) (Agmenellum quadruplicatum).